The primary structure comprises 468 residues: Ribosomal protein uS12 methylthiotransferase RimO (468 aa).

Positions 18–129 (PTVAFAHLGC…IVEVLERVEA (112 aa)) constitute an MTTase N-terminal domain. The [4Fe-4S] cluster site is built by C27, C63, C92, C167, C171, and C174. In terms of domain architecture, Radical SAM core spans 153 to 382 (TTGEAVAYLK…MTLQQPISAA (230 aa)). The TRAM domain maps to 385-456 (ARWVGRTVDA…IYDLRAEIVG (72 aa)).

Belongs to the methylthiotransferase family. RimO subfamily. [4Fe-4S] cluster is required as a cofactor.

Its subcellular location is the cytoplasm. The enzyme catalyses L-aspartate(89)-[ribosomal protein uS12]-hydrogen + (sulfur carrier)-SH + AH2 + 2 S-adenosyl-L-methionine = 3-methylsulfanyl-L-aspartate(89)-[ribosomal protein uS12]-hydrogen + (sulfur carrier)-H + 5'-deoxyadenosine + L-methionine + A + S-adenosyl-L-homocysteine + 2 H(+). Catalyzes the methylthiolation of an aspartic acid residue of ribosomal protein uS12. In Synechococcus sp. (strain WH7803), this protein is Ribosomal protein uS12 methylthiotransferase RimO.